We begin with the raw amino-acid sequence, 381 residues long: cAMP-dependent protein kinase type I-beta regulatory subunit (381 aa).

Residues 1–136 are dimerization and phosphorylation; that stretch reads MASPSCFHSE…ALAKAISKNV (136 aa). Serine 3 carries the phosphoserine modification. Tyrosine 21 carries the 3'-nitrotyrosine modification. A disordered region spans residues 66-88; sequence LARQKSNSQCDSHDEEISPTPPN. Phosphoserine occurs at positions 77 and 83. Threonine 85 bears the Phosphothreonine mark. Residues 96-100 carry the Pseudophosphorylation motif motif; it reads RRGGV. The residue at position 97 (arginine 97) is an Omega-N-methylarginine. Residues 137 to 254, glutamate 202, arginine 211, 255 to 381, glutamate 326, and arginine 335 contribute to the 3',5'-cyclic AMP site; these read LFSH…SKVS and ILES…SLTV.

It belongs to the cAMP-dependent kinase regulatory chain family. In terms of assembly, the inactive holoenzyme is composed of two regulatory chains and two catalytic chains. Activation by cAMP releases the two active catalytic monomers and the regulatory dimer. Interacts with PRKX; regulates this cAMP-dependent protein kinase. Interacts with smAKAP; this interaction may target PRKAR1B to the plasma membrane. Post-translationally, the pseudophosphorylation site binds to the substrate-binding region of the catalytic chain, resulting in the inhibition of its activity. As to expression, four types of regulatory chains are found: I-alpha, I-beta, II-alpha, and II-beta. Their expression varies among tissues and is in some cases constitutive and in others inducible.

The protein resides in the cell membrane. Its function is as follows. Regulatory subunit of the cAMP-dependent protein kinases involved in cAMP signaling in cells. In Mus musculus (Mouse), this protein is cAMP-dependent protein kinase type I-beta regulatory subunit (Prkar1b).